Reading from the N-terminus, the 251-residue chain is NADH-quinone oxidoreductase subunit B (251 aa).

[4Fe-4S] cluster-binding residues include C38, C39, C104, and C134. Positions 208-251 are disordered; sequence RKGLPPGSMTDVGWIPPEARERLKAGRGAGASGSGEREEGKEGA. Positions 242–251 are enriched in basic and acidic residues; the sequence is GEREEGKEGA.

This sequence belongs to the complex I 20 kDa subunit family. In terms of assembly, NDH-1 is composed of 14 different subunits. Subunits NuoB, C, D, E, F, and G constitute the peripheral sector of the complex. [4Fe-4S] cluster is required as a cofactor.

Its subcellular location is the cell membrane. The enzyme catalyses a quinone + NADH + 5 H(+)(in) = a quinol + NAD(+) + 4 H(+)(out). Functionally, NDH-1 shuttles electrons from NADH, via FMN and iron-sulfur (Fe-S) centers, to quinones in the respiratory chain. The immediate electron acceptor for the enzyme in this species is believed to be a menaquinone. Couples the redox reaction to proton translocation (for every two electrons transferred, four hydrogen ions are translocated across the cytoplasmic membrane), and thus conserves the redox energy in a proton gradient. This chain is NADH-quinone oxidoreductase subunit B, found in Rubrobacter xylanophilus (strain DSM 9941 / JCM 11954 / NBRC 16129 / PRD-1).